A 214-amino-acid chain; its full sequence is Adenylate kinase (214 aa).

15-20 serves as a coordination point for ATP; the sequence is GAGKGT. The tract at residues 35–64 is NMP; sequence ASGDLFREAIKNQSVIGRKIAAIISQGGYV. AMP-binding positions include Ser-36, Arg-41, 62–64, 90–93, and Gln-97; these read GYV and GYPR. Positions 127–164 are LID; the sequence is NRVICNNCNSVYNLLFQKPLVENSCDQCSAKLVKRSDD. Position 128 (Arg-128) interacts with ATP. Cys-131 and Cys-134 together coordinate Zn(2+). ATP is bound at residue 137–138; sequence VY. Cys-151 and Cys-154 together coordinate Zn(2+). AMP contacts are provided by Arg-161 and Arg-172. Residue Leu-200 participates in ATP binding.

The protein belongs to the adenylate kinase family. As to quaternary structure, monomer.

It localises to the cytoplasm. It carries out the reaction AMP + ATP = 2 ADP. The protein operates within purine metabolism; AMP biosynthesis via salvage pathway; AMP from ADP: step 1/1. Its function is as follows. Catalyzes the reversible transfer of the terminal phosphate group between ATP and AMP. Plays an important role in cellular energy homeostasis and in adenine nucleotide metabolism. In Mycoplasma genitalium (strain ATCC 33530 / DSM 19775 / NCTC 10195 / G37) (Mycoplasmoides genitalium), this protein is Adenylate kinase.